The chain runs to 310 residues: p-hydroxybenzoic acid efflux pump subunit AaeA (310 aa).

Residues 12 to 32 (AITLVLVILAFIAIFRAWVYY) traverse the membrane as a helical segment.

Belongs to the membrane fusion protein (MFP) (TC 8.A.1) family.

It localises to the cell inner membrane. Forms an efflux pump with AaeB. In Salmonella arizonae (strain ATCC BAA-731 / CDC346-86 / RSK2980), this protein is p-hydroxybenzoic acid efflux pump subunit AaeA.